The following is a 277-amino-acid chain: MDNVVDRQVFYISDGTAITAEVLGHAVMSQFPVSINSITLPFVENESRARAVKEQIDAIYQQTGVRPLVFYSIVLPEVREIILQSQGFCQDIVQALVAPLQEELRLDPSPVAHRTHGLNPANLNKYDARIAAIDYTLAHDDGISMRNLDQAQVILLGVSRCGKTPTSLYLAMQFGIRAANYPFIADDMDNLNLPAALRPFQHKLFGLTINPERLAAIREERRENSRYASMRQCRMEVAEVEALYRKHQIRYINSTNYSVEEIATKILDIMGLNRRMY.

157–164 (GVSRCGKT) is a binding site for ADP.

The protein belongs to the pyruvate, phosphate/water dikinase regulatory protein family. PSRP subfamily.

The enzyme catalyses [pyruvate, water dikinase] + ADP = [pyruvate, water dikinase]-phosphate + AMP + H(+). It carries out the reaction [pyruvate, water dikinase]-phosphate + phosphate + H(+) = [pyruvate, water dikinase] + diphosphate. In terms of biological role, bifunctional serine/threonine kinase and phosphorylase involved in the regulation of the phosphoenolpyruvate synthase (PEPS) by catalyzing its phosphorylation/dephosphorylation. The chain is Putative phosphoenolpyruvate synthase regulatory protein from Cronobacter sakazakii (strain ATCC BAA-894) (Enterobacter sakazakii).